We begin with the raw amino-acid sequence, 128 residues long: UPF0325 protein CKO_03204 (128 aa).

Belongs to the UPF0325 family.

The chain is UPF0325 protein CKO_03204 from Citrobacter koseri (strain ATCC BAA-895 / CDC 4225-83 / SGSC4696).